Here is a 1188-residue protein sequence, read N- to C-terminus: Meiotically up-regulated gene 190 protein (1188 aa).

A compositionally biased stretch (polar residues) spans 1-11 (MSTHSGDSTKQ). Disordered stretches follow at residues 1–61 (MSTH…DPIT) and 83–125 (FTVP…EADN). Positions 41–61 (EKKEEQQREQTENEKLFDPIT) are enriched in basic and acidic residues. Residues 84-112 (TVPNQSIQGSSLPSEKPYLSSNQPTNVYK) are compositionally biased toward polar residues. A helical transmembrane segment spans residues 173-193 (LVISWFFTHSIIISAVLPLAI). An SMP-LTD domain is found at 228–453 (IPESAEWMNH…SPKSMTIDLS (226 aa)). A disordered region spans residues 298-318 (ASESFSEKQASEAEHKDEPEQ). The span at 302–318 (FSEKQASEAEHKDEPEQ) shows a compositional bias: basic and acidic residues. 2 consecutive C2 domains span residues 451 to 576 (DLSK…ERCD) and 636 to 781 (KEEE…TKWY). Ca(2+) is bound by residues D485, D491, D544, D546, S549, and D552. Disordered stretches follow at residues 615-639 (TIPR…KEEE) and 1002-1066 (QRAS…GTMN). Position 1005 is a phosphoserine (S1005). Residues 1022 to 1032 (DDSVDTEDEET) show a composition bias toward acidic residues.

Requires Ca(2+) as cofactor.

The protein localises to the cytoplasm. The protein resides in the endoplasmic reticulum membrane. It localises to the nucleus membrane. It is found in the cytoskeleton. Its subcellular location is the microtubule organizing center. The protein localises to the spindle pole body. Has a role in meiosis. This is Meiotically up-regulated gene 190 protein (mug190) from Schizosaccharomyces pombe (strain 972 / ATCC 24843) (Fission yeast).